An 890-amino-acid chain; its full sequence is MTDVTIKTLAAERQTSVERLVQQFADAGIRKSADDSVSAQEKQTLIDHLNQKNSGPDKLTLQRKTRSTLNIPGTGGKSKSVQIEVRKKRTFVKRDPQEAERLAAEEQAQREAEEQARREAEESAKREAQQKAEREAAEQAKREAAEQAKREAAEKDKVSNQQDDMTKNAQAEKARREQEAAELKRKAEEEAHRKLEEEARRVAEEARRMAEENKWTDNAEPTEDSSDYHVTTSQHARQAEDESDREVEGGRGRGRNAKAARPKKGNKHAESKADREEARAAVRGGKGGKRKGSSLQQGFQKPAQAVNRDVVIGETITVGELANKMAVKGSQVIKAMMKLGAMATINQVIDQETAQLVAEEMGHKVILRRENELEEAVMSDRDTGAAAEPRAPVVTIMGHVDHGKTSLLDYIRSTKVASGEAGGITQHIGAYHVETENGMITFLDTPGHAAFTSMRARGAQATDIVVLVVAADDGVMPQTIEAIQHAKAAQVPVVVAVNKIDKPEADPDRVKNELSQYGILPEEWGGESQFVHVSAKAGTGIDELLDAILLQAEVLELKAVRKGMASGAVIESFLDKGRGPVATVLVREGTLHKGDIVLCGFEYGRVRAMRNELGQEVLEAGPSIPVEILGLSGVPAAGDEVTVVRDEKKAREVALYRQGKFREVKLARQQKSKLENMFANMTEGEVHEVNIVLKADVQGSVEAISDSLLKLSTDEVKVKIIGSGVGGITETDATLAAASNAILVGFNVRADASARKVIEAESLDLRYYSVIYNLIDEVKAAMSGMLSPELKQQIIGLAEVRDVFKSPKFGAIAGCMVTEGVVKRHNPIRVLRDNVVIYEGELESLRRFKDDVNEVRNGMECGIGVKNYNDVRTGDVIEVFEIIEIQRTIA.

The tract at residues 45–304 (LIDHLNQKNS…LQQGFQKPAQ (260 aa)) is disordered. Positions 67 to 81 (STLNIPGTGGKSKSV) are enriched in polar residues. Basic and acidic residues predominate over residues 92 to 217 (VKRDPQEAER…RMAEENKWTD (126 aa)). A compositionally biased stretch (basic residues) spans 252-266 (GRGRNAKAARPKKGN). Basic and acidic residues predominate over residues 267-280 (KHAESKADREEARA). The tr-type G domain maps to 389-558 (PRAPVVTIMG…LLQAEVLELK (170 aa)). The tract at residues 398–405 (GHVDHGKT) is G1. 398–405 (GHVDHGKT) serves as a coordination point for GTP. Positions 423–427 (GITQH) are G2. The tract at residues 444–447 (DTPG) is G3. Residues 444-448 (DTPGH) and 498-501 (NKID) each bind GTP. The tract at residues 498–501 (NKID) is G4. The interval 534–536 (SAK) is G5. Lysine 808 bears the N6-acetyllysine mark.

This sequence belongs to the TRAFAC class translation factor GTPase superfamily. Classic translation factor GTPase family. IF-2 subfamily.

It localises to the cytoplasm. Functionally, one of the essential components for the initiation of protein synthesis. Protects formylmethionyl-tRNA from spontaneous hydrolysis and promotes its binding to the 30S ribosomal subunits. Also involved in the hydrolysis of GTP during the formation of the 70S ribosomal complex. In Shigella sonnei (strain Ss046), this protein is Translation initiation factor IF-2.